The following is a 3434-amino-acid chain: Genome polyprotein (3434 aa).

Residues 1–106 lie on the Cytoplasmic side of the membrane; sequence MSKKPGGPGR…NRGTKKKRGN (106 aa). The segment at 2–15 is interaction with host EXOC1; that stretch reads SKKPGGPGRNRAIN. The tract at residues 37-72 is hydrophobic; homodimerization of capsid protein C; the sequence is LLDGRGPVRFVLALMTFFKFTALAPTKALLGRWKRI. Positions 105 to 126 are cleaved as a propeptide — ER anchor for the capsid protein C, removed in mature form by serine protease NS3; the sequence is GNNGPGLVMIITLMTVVSMVSS. A helical transmembrane segment spans residues 107–126; the sequence is NGPGLVMIITLMTVVSMVSS. Residues 127–248 lie on the Extracellular side of the membrane; that stretch reads LKLSNFQGKV…DSTKASRYLM (122 aa). N141 is a glycosylation site (N-linked (GlcNAc...) asparagine; by host). The helical transmembrane segment at 249-273 threads the bilayer; that stretch reads KTENWIIRNPGYAFVAVLLGWMLGS. Topologically, residues 274–278 are cytoplasmic; it reads NNGQR. The chain crosses the membrane as a helical span at residues 279 to 293; that stretch reads VVFVVLLLLVAPAYS. Residues 294-745 are Extracellular-facing; it reads FNCLGMSNRD…QVFGGAFRTL (452 aa). Intrachain disulfides connect C296–C323, C353–C409, C353–C414, C367–C398, C385–C409, C385–C414, C483–C580, and C597–C628. Positions 391–404 are fusion peptide; sequence DRGWGNGCGLFGKG. The helical transmembrane segment at 746–766 threads the bilayer; sequence FGGMSWITQGLMGALLLWMGV. Topologically, residues 767–772 are cytoplasmic; sequence NARDRS. Residues 773-793 form a helical membrane-spanning segment; that stretch reads IALVMLATGGVLLFLATNVHA. Topologically, residues 794-1218 are extracellular; the sequence is DSGCAIDVGR…AFAEANSGGD (425 aa). Disulfide bonds link C797–C808 and C848–C936. 3 N-linked (GlcNAc...) asparagine; by host glycosylation sites follow: N923, N968, and N1000. Intrachain disulfides connect C972/C1016, C1073/C1122, C1084/C1105, C1084/C1106, C1105/C1109, and C1106/C1109. A helical transmembrane segment spans residues 1219–1239; sequence VVHLALIAAFKIQPGFLAMTF. At 1240–1249 the chain is on the cytoplasmic side; it reads LRGKWTNQEN. A helical membrane pass occupies residues 1250-1270; that stretch reads ILLALGAAFFQMAATDLNFSL. Residues 1271–1286 lie on the Lumenal side of the membrane; the sequence is PGILNATATAWMLLRA. Residues 1287–1307 form a helical membrane-spanning segment; it reads ATQPSTSAIVMPLLCLLAPGM. R1308 is a topological domain (cytoplasmic). A helical membrane pass occupies residues 1309–1329; that stretch reads LLYLDTYRITLIIIGICSLIG. At 1330 to 1340 the chain is on the lumenal side; sequence ERRRAAAKKKG. Residues 1341-1361 traverse the membrane as a helical segment; that stretch reads AVLLGLALTSTGQFSASVMAA. Topologically, residues 1362-1373 are cytoplasmic; sequence GLMACNPNKKRG. The chain crosses the membrane as a helical span at residues 1374–1394; it reads WPATEVLTAVGLMFAIVGGLA. Over 1395 to 1397 the chain is Lumenal; it reads ELD. The chain crosses the membrane as a helical span at residues 1398 to 1418; sequence VDSMSIPFVLAGLMAVSYTIS. The Cytoplasmic segment spans residues 1419-1475; sequence GKSTDLWLERAADITWETDAAITGTSQRLDVKLDDDGDFHLINDPGVPWKIWVIRMT. An interacts with and activates NS3 protease region spans residues 1426–1465; that stretch reads LERAADITWETDAAITGTSQRLDVKLDDDGDFHLINDPGV. Positions 1476–1496 form an intramembrane region, helical; sequence ALGFAAWTPWAIIPAGIGYWL. Over 1497–2173 the chain is Cytoplasmic; sequence TVKYAKRGGV…MALEELPDAL (677 aa). The Peptidase S7 domain occupies 1504–1681; it reads GGVFWDTPAP…EREEEPVPEA (178 aa). Active-site charge relay system; for serine protease NS3 activity residues include H1554, D1578, and S1638. Residues 1684-1840 form the Helicase ATP-binding domain; that stretch reads ADMLRKKQLT…DTNAPVTDIQ (157 aa). Positions 1688–1691 are important for RNA-binding; sequence RKKQ. 1697–1704 provides a ligand contact to ATP; that stretch reads LHPGAGKT. The DEAH box motif lies at 1788–1791; the sequence is DEAH. In terms of domain architecture, Helicase C-terminal spans 1851-2016; it reads GFEWITEYTG…GLVAQMYGPE (166 aa). The residue at position 1892 (K1892) is an N6-acetyllysine; by host. The interval 1956–1980 is disordered; that stretch reads ASAAQRRGRVGRNPSQIGDEYHYGG. Residues 2167 to 2171 form a regulates the ATPase activity of NS3 helicase region; that stretch reads EELPD. Residues 2174 to 2194 form a helical membrane-spanning segment; it reads ETITLIVALAVMTAGVFLLLV. The Lumenal portion of the chain corresponds to 2195 to 2198; it reads QRRG. Positions 2199-2219 form an intramembrane region, helical; that stretch reads IGKLGLGGMVLGLATFFLWMA. D2220 is a topological domain (lumenal). A helical transmembrane segment spans residues 2221–2241; the sequence is VSGTKIAGTLLLALLMMIVLI. Over 2242–2256 the chain is Cytoplasmic; sequence PEPEKQRSQTDNQLA. A helical transmembrane segment spans residues 2257 to 2277; it reads VFLICVLLVVGVVAANEYGML. The Lumenal segment spans residues 2278-2313; sequence ERTKSDLGKIFSSTRQPQSALPLPSMNALALDLRPA. Positions 2314–2334 form an intramembrane region, helical; the sequence is TAWALYGGSTVVLTPLIKHLV. Residues 2335–2368 are Lumenal-facing; it reads TSEYITTSLASISAQAGSLFNLPRGLPFTELDFT. The chain crosses the membrane as a helical span at residues 2369–2389; that stretch reads VVLVFLGCWGQVSLTTLITAA. Over 2390–2446 the chain is Cytoplasmic; the sequence is ALATLHYGYMLPGWQAEALRAAQRRTAAGIMKNAVVDGLVATDVPELERTTPLMQKK. A helical membrane pass occupies residues 2447–2467; sequence VGQILLIGVSAAALLVNPCVT. The Lumenal segment spans residues 2468–2471; that stretch reads TVRE. Residues 2472–2492 form a helical membrane-spanning segment; the sequence is AGILISAALLTLWDNGAIAVW. Residues 2493–3434 are Cytoplasmic-facing; it reads NSTTATGLCH…EVNVQEDRVL (942 aa). In terms of domain architecture, mRNA cap 0-1 NS5-type MT spans 2530 to 2795; the sequence is GRPGGRTLGE…DVNLGSGTRA (266 aa). The tract at residues 2567–2587 is disordered; it reads SAARKARRDGNKTGGHPVSRG. S2585 is a binding site for S-adenosyl-L-methionine. S2585 carries the post-translational modification Phosphoserine. The For 2'-O-MTase activity role is filled by K2590. 6 residues coordinate S-adenosyl-L-methionine: G2615, W2616, T2633, K2634, D2660, and V2661. D2675 acts as the For 2'-O-MTase activity in catalysis. Residue I2676 participates in S-adenosyl-L-methionine binding. Residues K2711 and E2747 each act as for 2'-O-MTase activity in the active site. Residue Y2749 participates in S-adenosyl-L-methionine binding. Zn(2+) is bound by residues E2969, H2973, C2978, and C2981. The 153-residue stretch at 3059-3211 folds into the RdRp catalytic domain; it reads GKMYADDTAG…KPLDDRFANA (153 aa). The Zn(2+) site is built by H3246, C3262, and C3381.

It in the N-terminal section; belongs to the class I-like SAM-binding methyltransferase superfamily. mRNA cap 0-1 NS5-type methyltransferase family. Homodimer. Interacts (via N-terminus) with host EXOC1 (via C-terminus); this interaction results in EXOC1 degradation through the proteasome degradation pathway. In terms of assembly, forms heterodimers with envelope protein E in the endoplasmic reticulum and Golgi. As to quaternary structure, homodimer; in the endoplasmic reticulum and Golgi. Interacts with protein prM. Interacts with non-structural protein 1. Homodimer; Homohexamer when secreted. Interacts with envelope protein E. NS1 interacts with NS4B. Interacts with host complement protein CFH; this interaction leads to the degradation of C3. In terms of assembly, interacts (via N-terminus) with serine protease NS3. As to quaternary structure, forms a heterodimer with serine protease NS3. May form homooligomers. Forms a heterodimer with NS2B. Interacts with non-structural protein 2A (via N-terminus). Interacts with NS4B. Interacts with unphosphorylated RNA-directed RNA polymerase NS5; this interaction stimulates RNA-directed RNA polymerase NS5 guanylyltransferase activity. In terms of assembly, interacts with serine protease NS3. As to quaternary structure, homodimer. Interacts with host STAT2; this interaction inhibits the phosphorylation of the latter, and, when all viral proteins are present (polyprotein), targets STAT2 for degradation. Interacts with serine protease NS3. In terms of processing, specific enzymatic cleavages in vivo yield mature proteins. Cleavages in the lumen of endoplasmic reticulum are performed by host signal peptidase, whereas cleavages in the cytoplasmic side are performed by serine protease NS3. Signal cleavage at the 2K-4B site requires a prior NS3 protease-mediated cleavage at the 4A-2K site. Post-translationally, cleaved in post-Golgi vesicles by a host furin, releasing the mature small envelope protein M, and peptide pr. This cleavage is incomplete as up to 30% of viral particles still carry uncleaved prM. N-glycosylated. In terms of processing, N-glycosylated. The excreted form is glycosylated and this is required for efficient secretion of the protein from infected cells. Post-translationally, acetylated by host KAT5. Acetylation modulates NS3 RNA-binding and unwinding activities and plays an important positive role for viral replication. Phosphorylated on serines residues. This phosphorylation may trigger NS5 nuclear localization.

It localises to the virion. Its subcellular location is the host nucleus. The protein localises to the host cytoplasm. It is found in the host perinuclear region. The protein resides in the secreted. It localises to the virion membrane. Its subcellular location is the host endoplasmic reticulum membrane. It carries out the reaction Selective hydrolysis of -Xaa-Xaa-|-Yaa- bonds in which each of the Xaa can be either Arg or Lys and Yaa can be either Ser or Ala.. The catalysed reaction is RNA(n) + a ribonucleoside 5'-triphosphate = RNA(n+1) + diphosphate. The enzyme catalyses a ribonucleoside 5'-triphosphate + H2O = a ribonucleoside 5'-diphosphate + phosphate + H(+). It catalyses the reaction ATP + H2O = ADP + phosphate + H(+). It carries out the reaction a 5'-end (5'-triphosphoguanosine)-ribonucleoside in mRNA + S-adenosyl-L-methionine = a 5'-end (N(7)-methyl 5'-triphosphoguanosine)-ribonucleoside in mRNA + S-adenosyl-L-homocysteine. The catalysed reaction is a 5'-end (N(7)-methyl 5'-triphosphoguanosine)-ribonucleoside in mRNA + S-adenosyl-L-methionine = a 5'-end (N(7)-methyl 5'-triphosphoguanosine)-(2'-O-methyl-ribonucleoside) in mRNA + S-adenosyl-L-homocysteine + H(+). In terms of biological role, plays a role in virus budding by binding to the cell membrane and gathering the viral RNA into a nucleocapsid that forms the core of a mature virus particle. During virus entry, may induce genome penetration into the host cytoplasm after hemifusion induced by the surface proteins. Can migrate to the cell nucleus where it modulates host functions. Overcomes the anti-viral effects of host EXOC1 by sequestering and degrading the latter through the proteasome degradation pathway. Its function is as follows. Inhibits RNA silencing by interfering with host Dicer. Prevents premature fusion activity of envelope proteins in trans-Golgi by binding to envelope protein E at pH6.0. After virion release in extracellular space, gets dissociated from E dimers. Functionally, acts as a chaperone for envelope protein E during intracellular virion assembly by masking and inactivating envelope protein E fusion peptide. prM is the only viral peptide matured by host furin in the trans-Golgi network probably to avoid catastrophic activation of the viral fusion activity in acidic Golgi compartment prior to virion release. prM-E cleavage is inefficient, and many virions are only partially matured. These uncleaved prM would play a role in immune evasion. In terms of biological role, may play a role in virus budding. Exerts cytotoxic effects by activating a mitochondrial apoptotic pathway through M ectodomain. May display a viroporin activity. Its function is as follows. Binds to host cell surface receptor and mediates fusion between viral and cellular membranes. Envelope protein is synthesized in the endoplasmic reticulum in the form of heterodimer with protein prM. They play a role in virion budding in the ER, and the newly formed immature particle is covered with 60 spikes composed of heterodimer between precursor prM and envelope protein E. The virion is transported to the Golgi apparatus where the low pH causes dissociation of PrM-E heterodimers and formation of E homodimers. prM-E cleavage is inefficient, and many virions are only partially matured. These uncleaved prM would play a role in immune evasion. Involved in immune evasion, pathogenesis and viral replication. Once cleaved off the polyprotein, is targeted to three destinations: the viral replication cycle, the plasma membrane and the extracellular compartment. Essential for viral replication. Required for formation of the replication complex and recruitment of other non-structural proteins to the ER-derived membrane structures. Excreted as a hexameric lipoparticle that plays a role against host immune response. Antagonizing the complement function. Binds to the host macrophages and dendritic cells. Inhibits signal transduction originating from Toll-like receptor 3 (TLR3). Functionally, component of the viral RNA replication complex that functions in virion assembly and antagonizes the host alpha/beta interferon antiviral response. In terms of biological role, required cofactor for the serine protease function of NS3. May have membrane-destabilizing activity and form viroporins. Its function is as follows. Displays three enzymatic activities: serine protease, NTPase and RNA helicase. NS3 serine protease, in association with NS2B, performs its autocleavage and cleaves the polyprotein at dibasic sites in the cytoplasm: C-prM, NS2A-NS2B, NS2B-NS3, NS3-NS4A, NS4A-2K and NS4B-NS5. NS3 RNA helicase binds RNA and unwinds dsRNA in the 3' to 5' direction. Regulates the ATPase activity of the NS3 helicase activity. NS4A allows NS3 helicase to conserve energy during unwinding. Functionally, functions as a signal peptide for NS4B and is required for the interferon antagonism activity of the latter. In terms of biological role, induces the formation of ER-derived membrane vesicles where the viral replication takes place. Inhibits interferon (IFN)-induced host STAT1 phosphorylation and nuclear translocation, thereby preventing the establishment of cellular antiviral state by blocking the IFN-alpha/beta pathway. Inhibits STAT2 translocation in the nucleus after IFN-alpha treatment. Its function is as follows. Replicates the viral (+) and (-) RNA genome, and performs the capping of genomes in the cytoplasm. NS5 methylates viral RNA cap at guanine N-7 and ribose 2'-O positions. Besides its role in RNA genome replication, also prevents the establishment of cellular antiviral state by blocking the interferon-alpha/beta (IFN-alpha/beta) signaling pathway. Inhibits host TYK2 and STAT2 phosphorylation, thereby preventing activation of JAK-STAT signaling pathway. This is Genome polyprotein from Usutu virus (USUV).